We begin with the raw amino-acid sequence, 338 residues long: UDP-3-O-acylglucosamine N-acyltransferase (338 aa).

The active-site Proton acceptor is the H239.

It belongs to the transferase hexapeptide repeat family. LpxD subfamily. In terms of assembly, homotrimer.

It catalyses the reaction a UDP-3-O-[(3R)-3-hydroxyacyl]-alpha-D-glucosamine + a (3R)-hydroxyacyl-[ACP] = a UDP-2-N,3-O-bis[(3R)-3-hydroxyacyl]-alpha-D-glucosamine + holo-[ACP] + H(+). It functions in the pathway bacterial outer membrane biogenesis; LPS lipid A biosynthesis. Catalyzes the N-acylation of UDP-3-O-acylglucosamine using 3-hydroxyacyl-ACP as the acyl donor. Is involved in the biosynthesis of lipid A, a phosphorylated glycolipid that anchors the lipopolysaccharide to the outer membrane of the cell. In Xylella fastidiosa (strain M12), this protein is UDP-3-O-acylglucosamine N-acyltransferase.